We begin with the raw amino-acid sequence, 459 residues long: Phosphoenolpyruvate carboxylase (459 aa).

Belongs to the PEPCase type 2 family. In terms of assembly, homotetramer. Requires Mg(2+) as cofactor.

The catalysed reaction is oxaloacetate + phosphate = phosphoenolpyruvate + hydrogencarbonate. Functionally, catalyzes the irreversible beta-carboxylation of phosphoenolpyruvate (PEP) to form oxaloacetate (OAA), a four-carbon dicarboxylic acid source for the tricarboxylic acid cycle. In Pyrobaculum calidifontis (strain DSM 21063 / JCM 11548 / VA1), this protein is Phosphoenolpyruvate carboxylase.